A 76-amino-acid chain; its full sequence is Translational regulator CsrA (76 aa).

This sequence belongs to the CsrA/RsmA family. Homodimer; the beta-strands of each monomer intercalate to form a hydrophobic core, while the alpha-helices form wings that extend away from the core.

Its subcellular location is the cytoplasm. Its function is as follows. A translational regulator that binds mRNA to regulate translation initiation and/or mRNA stability. Usually binds in the 5'-UTR at or near the Shine-Dalgarno sequence preventing ribosome-binding, thus repressing translation. Its main target seems to be the major flagellin gene, while its function is anatagonized by FliW. This Wolinella succinogenes (strain ATCC 29543 / DSM 1740 / CCUG 13145 / JCM 31913 / LMG 7466 / NCTC 11488 / FDC 602W) (Vibrio succinogenes) protein is Translational regulator CsrA.